A 179-amino-acid polypeptide reads, in one-letter code: Repressor of phase 1 flagellin gene (179 aa).

In terms of biological role, transcriptional repressor of the FliC phase-1 flagellin. The chain is Repressor of phase 1 flagellin gene (fljA) from Salmonella typhimurium (strain LT2 / SGSC1412 / ATCC 700720).